The following is a 217-amino-acid chain: GrpE protein homolog 1, mitochondrial (217 aa).

The transit peptide at 1–27 (MAARCVRLARRSLPALALSFRPSPRLL) directs the protein to the mitochondrion. K94 bears the N6-acetyllysine; alternate mark. K94 is subject to N6-succinyllysine; alternate. K100 carries the post-translational modification N6-acetyllysine. Position 120 is an N6-succinyllysine (K120). At K215 the chain carries N6-acetyllysine; alternate. K215 carries the N6-succinyllysine; alternate modification.

It belongs to the GrpE family. Probable component of the PAM complex at least composed of a mitochondrial HSP70 protein, GRPEL1 or GRPEL2, TIMM44, TIMM16/PAM16 and TIMM14/DNAJC19. Binds to HSP70, HSC70 and HSJ1B. As to expression, ubiquitous. Particularly abundant in heart, kidney and liver.

The protein resides in the mitochondrion matrix. Essential component of the PAM complex, a complex required for the translocation of transit peptide-containing proteins from the inner membrane into the mitochondrial matrix in an ATP-dependent manner. Seems to control the nucleotide-dependent binding of mitochondrial HSP70 to substrate proteins. The sequence is that of GrpE protein homolog 1, mitochondrial (Grpel1) from Rattus norvegicus (Rat).